The primary structure comprises 396 residues: Flavohemoprotein (396 aa).

The Globin domain maps to 1–136; the sequence is MLDAQTIATV…LANVFIHREA (136 aa). His-85 serves as a coordination point for heme b. Catalysis depends on charge relay system residues Tyr-95 and Glu-135. Positions 147–396 are reductase; that stretch reads GGWEGTRPFR…YECFGPHKVL (250 aa). Positions 150–255 constitute an FAD-binding FR-type domain; the sequence is EGTRPFRIVA…AAPAGDFFMN (106 aa). Residues Tyr-188 and 204-207 each bind FAD; that span reads RQYS. 268 to 273 lines the NADP(+) pocket; it reads GVGQTP. 389 to 392 contributes to the FAD binding site; it reads CFGP.

The protein belongs to the globin family. Two-domain flavohemoproteins subfamily. It in the C-terminal section; belongs to the flavoprotein pyridine nucleotide cytochrome reductase family. In terms of assembly, monomer. Requires heme b as cofactor. It depends on FAD as a cofactor.

It catalyses the reaction 2 nitric oxide + NADPH + 2 O2 = 2 nitrate + NADP(+) + H(+). It carries out the reaction 2 nitric oxide + NADH + 2 O2 = 2 nitrate + NAD(+) + H(+). Is involved in NO detoxification in an aerobic process, termed nitric oxide dioxygenase (NOD) reaction that utilizes O(2) and NAD(P)H to convert NO to nitrate, which protects the bacterium from various noxious nitrogen compounds. Therefore, plays a central role in the inducible response to nitrosative stress. This Salmonella typhimurium (strain LT2 / SGSC1412 / ATCC 700720) protein is Flavohemoprotein (hmp).